The following is a 409-amino-acid chain: MSKVKGFIYKPLMVMLALLLVVVSPAGAGAAHSDASSDITLKVAIYPYVPDPARFQAAVLDQWQRQEPGVKLEFTDWDSYSADPPDDLDVFVLDSIFLSHFVDAGYLLPFGSQDIDQAEDVLPFALQGAKRNGEVYGLPQILCTNLLFYRKGDLKIGQVDNIYELYKKIGTSHSEQIPPPQNKGLLINMAGGTTKASMYLEALIDVTGQYTEYDLLPPLDPLNDKVIRGLRLLINMAGEKPSQYVPEDGDAYVRASWFAQGSGRAFIGYSESMMRMGDYAEQVRFKPISSSAGQDIPLFYSDVVSVNSKTAHPELAKKLANVMASADTVEQALRPQADGQYPQYLLPARHQVYEALMQDYPIYSELAQIVNKPSNRVFRLGPEVRTWLKDAKQVLPEALGLTDVSSLAS.

An N-terminal signal peptide occupies residues 1 to 29 (MSKVKGFIYKPLMVMLALLLVVVSPAGAG). The active-site Nucleophile is Cys143. The active-site Proton acceptor is Glu271.

In terms of assembly, monomer.

The protein localises to the secreted. The catalysed reaction is pyridine + thiamine = heteropyrithiamine + 5-(2-hydroxyethyl)-4-methylthiazole. Functionally, degrades thiamine by replacing its thiazole moiety with a wide range of nucleophiles. In Paenibacillus thiaminolyticus (Bacillus thiaminolyticus), this protein is Thiaminase-1.